The sequence spans 509 residues: Probable glycine dehydrogenase (decarboxylating) subunit 2 (509 aa).

Lys-278 is modified (N6-(pyridoxal phosphate)lysine).

Belongs to the GcvP family. C-terminal subunit subfamily. The glycine cleavage system is composed of four proteins: P, T, L and H. In this organism, the P 'protein' is a heterodimer of two subunits. It depends on pyridoxal 5'-phosphate as a cofactor.

It catalyses the reaction N(6)-[(R)-lipoyl]-L-lysyl-[glycine-cleavage complex H protein] + glycine + H(+) = N(6)-[(R)-S(8)-aminomethyldihydrolipoyl]-L-lysyl-[glycine-cleavage complex H protein] + CO2. The glycine cleavage system catalyzes the degradation of glycine. The P protein binds the alpha-amino group of glycine through its pyridoxal phosphate cofactor; CO(2) is released and the remaining methylamine moiety is then transferred to the lipoamide cofactor of the H protein. The protein is Probable glycine dehydrogenase (decarboxylating) subunit 2 of Saccharolobus islandicus (strain Y.N.15.51 / Yellowstone #2) (Sulfolobus islandicus).